A 315-amino-acid polypeptide reads, in one-letter code: Adenine deaminase (315 aa).

Residues His-14, His-16, and His-194 each coordinate Zn(2+). Catalysis depends on Glu-197, which acts as the Proton donor. Asp-275 lines the Zn(2+) pocket. Asp-276 contributes to the substrate binding site.

Belongs to the metallo-dependent hydrolases superfamily. Adenosine and AMP deaminases family. Adenine deaminase type 2 subfamily. It depends on Zn(2+) as a cofactor.

It carries out the reaction adenine + H2O + H(+) = hypoxanthine + NH4(+). In terms of biological role, catalyzes the hydrolytic deamination of adenine to hypoxanthine. Plays an important role in the purine salvage pathway and in nitrogen catabolism. This is Adenine deaminase from Pseudomonas putida (strain W619).